A 1368-amino-acid chain; its full sequence is DNA-directed RNA polymerase subunit beta (1368 aa).

This sequence belongs to the RNA polymerase beta chain family. The RNAP catalytic core consists of 2 alpha, 1 beta, 1 beta' and 1 omega subunit. When a sigma factor is associated with the core the holoenzyme is formed, which can initiate transcription.

The catalysed reaction is RNA(n) + a ribonucleoside 5'-triphosphate = RNA(n+1) + diphosphate. In terms of biological role, DNA-dependent RNA polymerase catalyzes the transcription of DNA into RNA using the four ribonucleoside triphosphates as substrates. This chain is DNA-directed RNA polymerase subunit beta, found in Cupriavidus necator (strain ATCC 17699 / DSM 428 / KCTC 22496 / NCIMB 10442 / H16 / Stanier 337) (Ralstonia eutropha).